Here is a 1344-residue protein sequence, read N- to C-terminus: MAEMKSPTKAEPASPAEAPQGDRRSLLEHSREFLDFFWDIAKPDQETRLRATEKLLEYLRTRPSDSEMKYALKRLITGLGVGREAARPCYSLALAQLLQSFEDIQLCDILGQIQEKYNLQAMNKAMMRPTLFANLFGVLALFQSGRLVKDKEALMKCVRLLKILSHHYNHLQGQPVKALVDILSEVPESMFQEILPKVLKGDMKVILSSPKYLELFLLARQRVPAELESLVGSVDLFSEDNIPSLVNILKVAANSVKKEQKLPDVALNLLRLALQENKFERFWKEVLEEGLLKKPSYTSSYMCFRLLGASLPLLSDEQLQLVMRGDLIRHFGEHMVVSKSQNPLRFIPEISAYVGTFLEGCQDDPKRQFTVMVAFTAITNQGLPVMPTFWRVTRFLNTEALQNYVTWLRDMFLQPDLDSLVDFSTANQKRVQVASLNVPERTVFRLRKWIIHRLVSLVDHLHLEKDEAVVEQIARFCLFHAFFKTKKATPQIPETKQHFSFPLEDGNRGVIVSAFFSLLQTLSVKFRQTPDLAENGKPWTYRLVQLADMLLKHNRNVANVTPLTAQQRQAWDQMMSTLKELEAQSSETRAIAFQHLLLLVGLHLFKSPAESCDVLGDIQTCIKKSMEQNLRRSRSRAKASQEPVWVEVMVEILLSLLAQPSNLMRQVVRSVFGHVCSHLTPRGLQLILAVLNPETNEDEEDNVVVTDTDEKQLKHGEDADSDSEDSKNSESDVDSEDGEESEEEDRDKDVDPGFRQQLMEVLQAGNALGGEEEEEEELGDEAMMALDQNLASLFAEQKMRIQARHEEKNKLQKEKQLRRDFQIRALDLIEVLVTKQPEHPLILELLEPLLNIIQRSMRSRGSTKQEQDLLHKTARIFMHHLCRARHYCHEVEPGAEALHAQVERLVQQAGNQADASVALYYFNASLYLLRVLKGNTTKRYQDGQKLEGADIKSEPKDSEVQTTSCLDLDFVTRVYSASLESLLTKRNSPLTIPMFLDLFSRYPVICKNLLPIVVQHVAGSSRPRHQAQACLLLQKALSARELRVCFEDPEWEQLISQVLGKTTQTLQTLGEAQSKGEHQRELSILELLNTVFRIVNHEKLSVDLTAFLGMLQGKQQKLQQNLQQGNHSSGSSRLYDLYWQAMNLLGVQRPKSEKKNVKDIPSDSQSPISTKRKKKGFLPETKKRKKLKSEGTTSEKKAASQQDAVTEGAMPAATGKDQPPSTGKKRRKRVKANTPSQVNGVTVAKSPAPNNPTLSPSTPPAKTPKVQKKKEKLSQVNGSTPVSPVEPESKKHQKALSTKEVKRRSSQSALPKKRARLSLVSRSPSLLQSGIRKRRVARRRVQTP.

Positions M1–R24 are disordered. The residue at position 2 (A2) is an N-acetylalanine. The interaction with MYB stretch occupies residues A2–E580. At S14 the chain carries Phosphoserine. Residues K69 and K156 each carry the N6-acetyllysine modification. Short sequence motifs (nuclear export signal) lie at residues S238–V256 and K261–F279. Disordered regions lie at residues N696–P752 and P1150–P1344. A compositionally biased stretch (basic and acidic residues) spans T708–E730. Acidic residues predominate over residues S731–R746. A compositionally biased stretch (basic and acidic residues) spans P1150–P1161. K1151 participates in a covalent cross-link: Glycyl lysine isopeptide (Lys-Gly) (interchain with G-Cter in SUMO2). A required for nuclear and nucleolar localization region spans residues K1154–P1344. 2 positions are modified to phosphoserine: S1162 and S1166. The segment covering T1170 to L1187 has biased composition (basic residues). S1189 carries the post-translational modification Phosphoserine. Residue T1193 is modified to Phosphothreonine. Phosphoserine occurs at positions 1221 and 1246. Low complexity predominate over residues P1247–P1256. The residue at position 1253 (T1253) is a Phosphothreonine. Position 1255 is a phosphoserine (S1255). Phosphothreonine occurs at positions 1258 and 1280. Phosphoserine is present on residues S1283, S1305, and S1318. Residues V1301 to R1316 are compositionally biased toward basic residues. Over residues L1317 to S1329 the composition is skewed to low complexity. Residue R1322 is modified to Citrulline. Phosphoserine occurs at positions 1323, 1325, and 1329. A compositionally biased stretch (basic residues) spans I1331–P1344.

This sequence belongs to the MYBBP1A family. As to quaternary structure, binds to and represses JUN and MYB via the leucine zipper regions present in these proteins. Also binds to and represses PPARGC1A: this interaction is abrogated when PPARGC1A is phosphorylated by MAPK1/ERK. Binds to and stimulates transcription by AHR. Binds to KPNA2. Component of the B-WICH complex, at least composed of SMARCA5/SNF2H, BAZ1B/WSTF, SF3B1, DEK, MYO1C, ERCC6, MYBBP1A and DDX21. Interacts with CLOCK and CRY1. Citrullinated by PADI4.

It is found in the nucleus. It localises to the nucleolus. The protein localises to the cytoplasm. Functionally, may activate or repress transcription via interactions with sequence specific DNA-binding proteins. Repression may be mediated at least in part by histone deacetylase activity (HDAC activity). Acts as a corepressor and in concert with CRY1, represses the transcription of the core circadian clock component PER2. Preferentially binds to dimethylated histone H3 'Lys-9' (H3K9me2) on the PER2 promoter. Has a role in rRNA biogenesis together with PWP1. The chain is Myb-binding protein 1A (Mybbp1a) from Rattus norvegicus (Rat).